Here is a 278-residue protein sequence, read N- to C-terminus: Large ribosomal subunit protein uL2 (278 aa).

3 disordered regions span residues 1–20 (MGIR…SVSD), 25–58 (TRST…GGGH), and 223–278 (GVVM…GKKR). Basic residues predominate over residues 37–58 (LHGKGGRNAHGRITTRHKGGGH). Over residues 253–268 (PEGRTRKPNKPSDKLI) the composition is skewed to basic and acidic residues. The span at 269 to 278 (VRRRRTGKKR) shows a compositional bias: basic residues.

Belongs to the universal ribosomal protein uL2 family. In terms of assembly, part of the 50S ribosomal subunit. Forms a bridge to the 30S subunit in the 70S ribosome.

Its function is as follows. One of the primary rRNA binding proteins. Required for association of the 30S and 50S subunits to form the 70S ribosome, for tRNA binding and peptide bond formation. It has been suggested to have peptidyltransferase activity; this is somewhat controversial. Makes several contacts with the 16S rRNA in the 70S ribosome. This chain is Large ribosomal subunit protein uL2, found in Mycolicibacterium smegmatis (strain ATCC 700084 / mc(2)155) (Mycobacterium smegmatis).